A 636-amino-acid polypeptide reads, in one-letter code: Phosphomethylpyrimidine synthase (636 aa).

The disordered stretch occupies residues 48–70 (DDTPTDFGGEKNPPVRVYDTSGP). Substrate is bound by residues Asn231, Met260, Tyr289, His325, 345-347 (SRG), 386-389 (DGLR), and Glu425. His429 provides a ligand contact to Zn(2+). Substrate is bound at residue Tyr452. His493 provides a ligand contact to Zn(2+). Cys573, Cys576, and Cys581 together coordinate [4Fe-4S] cluster.

It belongs to the ThiC family. As to quaternary structure, homodimer. The cofactor is [4Fe-4S] cluster.

The enzyme catalyses 5-amino-1-(5-phospho-beta-D-ribosyl)imidazole + S-adenosyl-L-methionine = 4-amino-2-methyl-5-(phosphooxymethyl)pyrimidine + CO + 5'-deoxyadenosine + formate + L-methionine + 3 H(+). It participates in cofactor biosynthesis; thiamine diphosphate biosynthesis. Functionally, catalyzes the synthesis of the hydroxymethylpyrimidine phosphate (HMP-P) moiety of thiamine from aminoimidazole ribotide (AIR) in a radical S-adenosyl-L-methionine (SAM)-dependent reaction. The sequence is that of Phosphomethylpyrimidine synthase from Cellvibrio japonicus (strain Ueda107) (Pseudomonas fluorescens subsp. cellulosa).